The primary structure comprises 169 residues: Ribosome maturation factor RimM (169 aa).

The region spanning 97–169 is the PRC barrel domain; sequence EDEYYWTDLV…IITADWGLDY (73 aa).

It belongs to the RimM family. Binds ribosomal protein uS19.

Its subcellular location is the cytoplasm. Functionally, an accessory protein needed during the final step in the assembly of 30S ribosomal subunit, possibly for assembly of the head region. Essential for efficient processing of 16S rRNA. May be needed both before and after RbfA during the maturation of 16S rRNA. It has affinity for free ribosomal 30S subunits but not for 70S ribosomes. The chain is Ribosome maturation factor RimM from Neisseria meningitidis serogroup C / serotype 2a (strain ATCC 700532 / DSM 15464 / FAM18).